The chain runs to 62 residues: Photosystem II reaction center protein Z (62 aa).

2 helical membrane passes run 8–28 (AVFALIATSSILLIGVPVVFA) and 41–61 (FSGTSLWIGLVFLVGILNSLI).

The protein belongs to the PsbZ family. PSII is composed of 1 copy each of membrane proteins PsbA, PsbB, PsbC, PsbD, PsbE, PsbF, PsbH, PsbI, PsbJ, PsbK, PsbL, PsbM, PsbT, PsbY, PsbZ, Psb30/Ycf12, at least 3 peripheral proteins of the oxygen-evolving complex and a large number of cofactors. It forms dimeric complexes.

The protein localises to the plastid. Its subcellular location is the chloroplast thylakoid membrane. Functionally, may control the interaction of photosystem II (PSII) cores with the light-harvesting antenna, regulates electron flow through the 2 photosystem reaction centers. PSII is a light-driven water plastoquinone oxidoreductase, using light energy to abstract electrons from H(2)O, generating a proton gradient subsequently used for ATP formation. The protein is Photosystem II reaction center protein Z of Daucus carota (Wild carrot).